Consider the following 253-residue polypeptide: Small ribosomal subunit protein uS3 (253 aa).

The 69-residue stretch at 38–106 (IRKYIHARLS…EVQINIFEIK (69 aa)) folds into the KH type-2 domain. The disordered stretch occupies residues 216–253 (AGMDKKQAGQGGGKGGDSPRGDRKPFNKGGKPDARKRK). Basic and acidic residues predominate over residues 232–253 (DSPRGDRKPFNKGGKPDARKRK).

Belongs to the universal ribosomal protein uS3 family. In terms of assembly, part of the 30S ribosomal subunit. Forms a tight complex with proteins S10 and S14.

Its function is as follows. Binds the lower part of the 30S subunit head. Binds mRNA in the 70S ribosome, positioning it for translation. This is Small ribosomal subunit protein uS3 from Flavobacterium psychrophilum (strain ATCC 49511 / DSM 21280 / CIP 103535 / JIP02/86).